The primary structure comprises 62 residues: Large ribosomal subunit protein uL29 (62 aa).

Belongs to the universal ribosomal protein uL29 family.

This Laribacter hongkongensis (strain HLHK9) protein is Large ribosomal subunit protein uL29.